The chain runs to 117 residues: Large ribosomal subunit protein bL19 (117 aa).

Belongs to the bacterial ribosomal protein bL19 family.

Its function is as follows. This protein is located at the 30S-50S ribosomal subunit interface and may play a role in the structure and function of the aminoacyl-tRNA binding site. In Leptothrix cholodnii (strain ATCC 51168 / LMG 8142 / SP-6) (Leptothrix discophora (strain SP-6)), this protein is Large ribosomal subunit protein bL19.